Reading from the N-terminus, the 160-residue chain is Transcriptional repressor NrdR (160 aa).

The segment at 3–34 (CPRCHHNNSRVIDSRQADDGRAIRRRRECENC) is a zinc-finger region. Residues 49-139 (LLVIKKNGDR…VYRQFKDMSV (91 aa)) form the ATP-cone domain.

This sequence belongs to the NrdR family. Requires Zn(2+) as cofactor.

In terms of biological role, negatively regulates transcription of bacterial ribonucleotide reductase nrd genes and operons by binding to NrdR-boxes. In Enterococcus faecalis (strain ATCC 700802 / V583), this protein is Transcriptional repressor NrdR.